Consider the following 283-residue polypeptide: Elongation factor Ts (283 aa).

The tract at residues 80-83 (TDFV) is involved in Mg(2+) ion dislocation from EF-Tu.

The protein belongs to the EF-Ts family.

The protein localises to the cytoplasm. Associates with the EF-Tu.GDP complex and induces the exchange of GDP to GTP. It remains bound to the aminoacyl-tRNA.EF-Tu.GTP complex up to the GTP hydrolysis stage on the ribosome. This Cronobacter sakazakii (strain ATCC BAA-894) (Enterobacter sakazakii) protein is Elongation factor Ts.